We begin with the raw amino-acid sequence, 129 residues long: Large ribosomal subunit protein bL17 (129 aa).

Belongs to the bacterial ribosomal protein bL17 family. Part of the 50S ribosomal subunit. Contacts protein L32.

This Acidovorax ebreus (strain TPSY) (Diaphorobacter sp. (strain TPSY)) protein is Large ribosomal subunit protein bL17.